The primary structure comprises 627 residues: Protein EXECUTER 2, chloroplastic (627 aa).

Disordered stretches follow at residues 1–34 (MSAATACASPAAARPPLHIPLRSPPSAAHLPSAA), 212–277 (PTKG…AKDS), and 308–359 (EAEL…SKSP). The N-terminal 45 residues, 1-45 (MSAATACASPAAARPPLHIPLRSPPSAAHLPSAAASRRASSAACR), are a transit peptide targeting the chloroplast. Residues 217–229 (SSASSVSSATAES) show a composition bias toward low complexity. 2 stretches are compositionally biased toward acidic residues: residues 308–321 (EAELASDSSEELVQ) and 331–353 (SLEDSTTEELQQDDVPDGDSDSA).

The protein localises to the plastid. The protein resides in the chloroplast. Functionally, together with EX1, enables higher plants to perceive singlet oxygen as a stress signal in plastid that activates a genetically determined nuclear stress response program which triggers a programmed cell death (PCD). This transfer of singlet oxygen-induced stress-related signals from the plastid to the nucleus that triggers genetically controlled PCD pathway is unique to photosynthetic eukaryotes and operates under mild stress conditions, impeding photosystem II (PSII) without causing photooxidative damage of the plant. In Oryza sativa subsp. japonica (Rice), this protein is Protein EXECUTER 2, chloroplastic.